The primary structure comprises 304 residues: DCN1-like protein 3 (304 aa).

Disordered regions lie at residues 1–86 and 284–304; these read MGQC…AEES and EGEGRGALSSGPEGLCPEEQT. Gly-2 carries the N-myristoyl glycine lipid modification. A DCUN1 domain is found at 86–278; the sequence is SSLQRLEELF…LFDTFVEWEM (193 aa).

In terms of assembly, part of a complex containing DCUN1D3, CUL3 and RBX1. Interacts (via the DCUN1 domain) with the unneddylated cullins: interacts with CUL1, CUL2, CUL3, CUL4A, CUL4B and CUL5; these interactions promote the cullin neddylation and the identity of the cullin dictates the affinity of the interaction. Interacts preferentially with CUL3; this interaction triggers the relocalization of CUL3 to the cell membrane where CUL3 is neddylated. Interacts (via DCUN1 domain) with RBX1. May also interact with regulators or subunits of cullin-RING ligases such as RNF7, ELOB and DDB1; these interactions are bridged by cullins. Interacts (via DCUN1 domain) with CAND1; this interaction is bridged by cullins and strongly inhibits cullin neddylation. These CAND-cullin-DCNL complexes can only be neddylated in the presence of a substrate adapter. Interacts (via DCUN1 domain) with the N-terminally acetylated form of UBE2M and UBE2F.

The protein resides in the cell membrane. Its subcellular location is the cytoplasm. The protein localises to the nucleus. It is found in the perinuclear region. In terms of biological role, contributes to the neddylation of all cullins by transferring NEDD8 from N-terminally acetylated NEDD8-conjugating E2s enzyme to different cullin C-terminal domain-RBX complexes and may play a role in the cell cycle progression by regulating the SCF ubiquitin E3 ligase complex, after UV damage. At the cell membrane, can promote and as well inhibit cullins neddylation. The polypeptide is DCN1-like protein 3 (Pongo abelii (Sumatran orangutan)).